The primary structure comprises 205 residues: Small ribosomal subunit protein uS4 (205 aa).

One can recognise an S4 RNA-binding domain in the interval 95-156 (SRLDNIVYRM…KTIKIPIVKA (62 aa)).

Belongs to the universal ribosomal protein uS4 family. Part of the 30S ribosomal subunit. Contacts protein S5. The interaction surface between S4 and S5 is involved in control of translational fidelity.

Its function is as follows. One of the primary rRNA binding proteins, it binds directly to 16S rRNA where it nucleates assembly of the body of the 30S subunit. Functionally, with S5 and S12 plays an important role in translational accuracy. This is Small ribosomal subunit protein uS4 from Mycoplasma pneumoniae (strain ATCC 29342 / M129 / Subtype 1) (Mycoplasmoides pneumoniae).